The chain runs to 115 residues: NADH-ubiquinone oxidoreductase chain 3 (115 aa).

3 helical membrane passes run 4-24 (LTAL…AFWL), 55-75 (FFLV…LLPL), and 83-103 (YINI…LGLA).

Belongs to the complex I subunit 3 family. In terms of assembly, core subunit of respiratory chain NADH dehydrogenase (Complex I) which is composed of 45 different subunits. Interacts with TMEM186. Interacts with TMEM242.

The protein localises to the mitochondrion inner membrane. It carries out the reaction a ubiquinone + NADH + 5 H(+)(in) = a ubiquinol + NAD(+) + 4 H(+)(out). Core subunit of the mitochondrial membrane respiratory chain NADH dehydrogenase (Complex I) which catalyzes electron transfer from NADH through the respiratory chain, using ubiquinone as an electron acceptor. Essential for the catalytic activity of complex I. In Peromyscus polionotus (Oldfield mouse), this protein is NADH-ubiquinone oxidoreductase chain 3.